The chain runs to 243 residues: uncharacterized protein (243 aa).

Residues 157 to 181 (SEETKEQPDATTSEKSRSPECPKTT) are disordered.

This is an uncharacterized protein from Rattus norvegicus (Rat).